The chain runs to 533 residues: Ribonuclease III domain-containing protein RNC1, chloroplastic (533 aa).

A chloroplast-targeting transit peptide spans 1 to 30 (MAPPAMAFQALALGPLPLPLPAARRRRRVR). 2 disordered regions span residues 31-57 (VLAV…NSPS) and 66-85 (RKKA…ILKP). The span at 39 to 53 (TPPPPPSPSSPPEPA) shows a compositional bias: pro residues. Residues 69 to 82 (AVSPKKKHPPRRFI) show a composition bias toward basic residues. 2 consecutive RNase III domains span residues 164–279 (LLYL…LCFG) and 411–511 (EHPR…CVYG).

In terms of assembly, interacts with RNA. Part of large ribonucleo-protein particles that contain CAF1 and/or CAF2.

It is found in the plastid. The protein localises to the chloroplast. In terms of biological role, binds specific group II introns in chloroplasts and facilitates their splicing. Acts on both subgroup IIA and subgroup IIB introns. The substrates of the subgroup II also require the CRM domain proteins CAF1 or CAF2. Binds both single-stranded and double-stranded RNA non-specifically, but lacks endonuclease activity. Required for plastid ribosome biogenesis. The polypeptide is Ribonuclease III domain-containing protein RNC1, chloroplastic (Oryza sativa subsp. japonica (Rice)).